We begin with the raw amino-acid sequence, 228 residues long: CD302 antigen (228 aa).

Positions 1–20 (MPHAALSSLVLLSLATAIFA) are cleaved as a signal peptide. Topologically, residues 21–165 (DCPSSIWVQF…YDKKYLSDNH (145 aa)) are extracellular. Residues 30–149 (FQGSCYTFLQ…CEMSSVTGTL (120 aa)) enclose the C-type lectin domain. N-linked (GlcNAc...) asparagine glycosylation is present at asparagine 107. Cysteine 125 and cysteine 140 are disulfide-bonded. The helical transmembrane segment at 166-186 (ILISTLVIASTVTLAVLGAVI) threads the bilayer. Residues 187–228 (WFLYRRSARSGFTSFSPAPQSPYSDGCALVVSEEDEYSVQLD) are Cytoplasmic-facing.

Its subcellular location is the membrane. It is found in the cell projection. The protein resides in the filopodium. The protein localises to the cytoplasm. It localises to the cell cortex. Its subcellular location is the microvillus. In terms of biological role, potential multifunctional C-type lectin receptor that may play roles in endocytosis and phagocytosis as well as in cell adhesion and migration. This is CD302 antigen (Cd302) from Rattus norvegicus (Rat).